A 702-amino-acid polypeptide reads, in one-letter code: Phosphoglycerol transferase I (702 aa).

3 consecutive transmembrane segments (helical) span residues 3–25, 73–95, and 102–124; these read WILA…LAWL, GYIA…LRVR, and GGGA…SPLY.

It belongs to the OpgB family.

It is found in the cell inner membrane. The catalysed reaction is a phosphatidylglycerol + a membrane-derived-oligosaccharide D-glucose = a 1,2-diacyl-sn-glycerol + a membrane-derived-oligosaccharide 6-(glycerophospho)-D-glucose.. The protein operates within glycan metabolism; osmoregulated periplasmic glucan (OPG) biosynthesis. Transfers a phosphoglycerol residue from phosphatidylglycerol to the membrane-bound nascent glucan backbones. The sequence is that of Phosphoglycerol transferase I from Xanthomonas campestris pv. campestris (strain ATCC 33913 / DSM 3586 / NCPPB 528 / LMG 568 / P 25).